A 455-amino-acid polypeptide reads, in one-letter code: Ribulose bisphosphate carboxylase large chain (455 aa).

Lysine 5 bears the N6,N6,N6-trimethyllysine mark. Substrate-binding residues include asparagine 114 and threonine 164. Catalysis depends on lysine 166, which acts as the Proton acceptor. Residue lysine 168 participates in substrate binding. The Mg(2+) site is built by lysine 192, aspartate 194, and glutamate 195. Lysine 192 bears the N6-carboxylysine mark. The active-site Proton acceptor is the histidine 285. Substrate-binding residues include arginine 286, histidine 318, and serine 370.

The protein belongs to the RuBisCO large chain family. Type I subfamily. In terms of assembly, heterohexadecamer of 8 large chains and 8 small chains; disulfide-linked. The disulfide link is formed within the large subunit homodimers. Mg(2+) serves as cofactor. The disulfide bond which can form in the large chain dimeric partners within the hexadecamer appears to be associated with oxidative stress and protein turnover.

The protein localises to the plastid. It localises to the chloroplast. It carries out the reaction 2 (2R)-3-phosphoglycerate + 2 H(+) = D-ribulose 1,5-bisphosphate + CO2 + H2O. It catalyses the reaction D-ribulose 1,5-bisphosphate + O2 = 2-phosphoglycolate + (2R)-3-phosphoglycerate + 2 H(+). Functionally, ruBisCO catalyzes two reactions: the carboxylation of D-ribulose 1,5-bisphosphate, the primary event in carbon dioxide fixation, as well as the oxidative fragmentation of the pentose substrate in the photorespiration process. Both reactions occur simultaneously and in competition at the same active site. The protein is Ribulose bisphosphate carboxylase large chain of Lupinus cosentinii (West Australian blue lupine).